Here is a 647-residue protein sequence, read N- to C-terminus: Zinc transporter ZIP4 (647 aa).

An N-terminal signal peptide occupies residues 1-22 (MASLVSLELGLLLAVLVVTATA). Residues 23 to 327 (SPPAGLLSLL…QDQLSQSERY (305 aa)) are Extracellular-facing. Intrachain disulfides connect Cys57-Cys62, Cys65-Cys111, and Cys160-Cys195. Residues 236 to 255 (EAHSDHSHRHRGASSRDPVP) are disordered. An N-linked (GlcNAc...) asparagine glycan is attached at Asn261. Residues Cys270 and Cys309 are joined by a disulfide bond. A helical transmembrane segment spans residues 328–348 (LYGSLATLLICLCAVFGLLLL). At 349–359 (TCTGCRGVTHY) the chain is on the cytoplasmic side. A helical membrane pass occupies residues 360 to 380 (ILQTFLSLAVGAVTGDAVLHL). The Extracellular portion of the chain corresponds to 381–402 (TPKVLGLHTHSEEGLSPQPTWR). Residues 403-423 (LLAMLAGLYAFFLFENLFNLL) form a helical membrane-spanning segment. Over 424-498 (LPRDPEDLED…LSPELRLLPY (75 aa)) the chain is Cytoplasmic. The Essential for SLC39A4 endocytosis motif lies at 452–454 (LQL). The tract at residues 458 to 484 (ELRQPKPPHEGSRADLVAEESPELLNP) is disordered. Basic and acidic residues predominate over residues 460-470 (RQPKPPHEGSR). A helical transmembrane segment spans residues 499-518 (MITLGDAVHNFADGLAVGAA). The Zn(2+) site is built by His507, Asn508, and Asp511. Residues 519–526 (FASSWKTG) are Extracellular-facing. A helical transmembrane segment spans residues 527 to 553 (LATSLAVFCHELPHELGDFAALLHAGL). His536, Glu537, and His540 together coordinate Zn(2+). Over 554–558 (SVRQA) the chain is Cytoplasmic. The helical transmembrane segment at 559–579 (LLLNLASALTAFAGLYVALAV) threads the bilayer. Over 580–586 (GVSEESE) the chain is Extracellular. A helical membrane pass occupies residues 587-607 (AWILAVATGLFLYVALCDMLP). At 608-617 (AMLKVRDPRP) the chain is on the cytoplasmic side. A helical membrane pass occupies residues 618-638 (WLLFLLHNVGLLGGWTVLLLL). The Extracellular portion of the chain corresponds to 639-647 (SLYEDDITF).

It belongs to the ZIP transporter (TC 2.A.5) family. As to quaternary structure, homodimer; homodimerization is mediated by the transmembrane domain. Post-translationally, the extracellular N-terminal ectodomain is cleaved when cells are Zn(2+) deficient, N-terminally cleaved SLC39A4 is internalized at a faster rate. Under excess Zn(2+) conditions, SLC39A4 on the cell surface is rapidly endocytosed, ubiquitinated and degraded. In terms of processing, glycosylated. Highly expressed in kidney, small intestine, stomach, colon, jejunum and duodenum.

It localises to the cell membrane. The protein localises to the recycling endosome membrane. Its subcellular location is the apical cell membrane. The catalysed reaction is Zn(2+)(in) = Zn(2+)(out). The Zn(2+) uniporter activity is regulated by zinc availability. Extracellular acidification stimulated SLC39A4-dependent Zn(2+) uptake. In terms of biological role, selective transporter that mediates the uptake of Zn(2+). Plays an essential role for dietary zinc uptake from small intestine. The Zn(2+) uniporter activity is regulated by zinc availability. Also exhibits polyspecific binding and transport of Cu(2+), Cd(2+) and possibly Ni(2+) but at higher concentrations. The sequence is that of Zinc transporter ZIP4 from Homo sapiens (Human).